The primary structure comprises 497 residues: E3 ubiquitin-protein ligase CBL-C (497 aa).

Residues 7–145 (PQGWQWGEPR…SALFPEGKYC (139 aa)) form a 4H region. One can recognise a Cbl-PTB domain in the interval 7-321 (PQGWQWGEPR…GKNHNPDLTE (315 aa)). An EF-hand-like region spans residues 146 to 218 (GHLYQITKGS…FEFDIFTRLF (73 aa)). Ca(2+) contacts are provided by D199, T201, and E210. The tract at residues 219–321 (QPWPTLLKNW…GKNHNPDLTE (103 aa)) is SH2-like. R264 lines the 4-O-phospho-L-tyrosine pocket. A linker region spans residues 322-350 (LCRAVLNQCIQVSQEQLQLYQAMNSTFEL). Y341 is subject to Phosphotyrosine; by SRC. An RING-type zinc finger spans residues 351-390 (CKICTERDKDVRIEPCGHLLCSCCLAAWQHSDSQTCPFCR). An interaction with RET region spans residues 351 to 497 (CKICTERDKD…QVREGATESS (147 aa)).

Interacts with Ubiquitin-conjugating enzyme E2 UBE2D2 and UBE2D3. Interacts with EGFR (tyrosine phosphorylated). Interacts with the SH3 domain proteins LYN and CRK. Interacts (via RING-type zinc finger) with TGFB1I1 (via LIM zinc-binding domain 2); the interaction is direct and enhances the E3 activity. Interacts directly with RET (inactive) and CD2AP; dissociates from RET upon RET activation by GDNF which also increases the interaction with CD2AP suggesting dissociation as CBLC:CD2AP complex. Interacts with SRC; the interaction is enhanced when SRC is phosphorylated at 'Tyr-419'. Phosphorylated on multiple tyrosine residues by SRC. In terms of processing, autoubiquitinated, when phosphorylated at Tyr-341.

The catalysed reaction is S-ubiquitinyl-[E2 ubiquitin-conjugating enzyme]-L-cysteine + [acceptor protein]-L-lysine = [E2 ubiquitin-conjugating enzyme]-L-cysteine + N(6)-ubiquitinyl-[acceptor protein]-L-lysine.. Its activity is regulated as follows. Phosphorylation at Tyr-341 is necessary and sufficient for the activation of E3 activity. Acts as an E3 ubiquitin-protein ligase, which accepts ubiquitin from specific E2 ubiquitin-conjugating enzymes, and then transfers it to substrates promoting their degradation by the proteasome. Functionally coupled with the E2 ubiquitin-protein ligases UB2D1, UB2D2 and UB2D3. Regulator of EGFR mediated signal transduction; upon EGF activation, ubiquitinates EGFR. Inhibits EGF stimulated MAPK1 activation. Promotes ubiquitination of SRC phosphorylated at 'Tyr-419', has the highest ubiquitin ligase activity among CBL family proteins. In collaboration with CD2AP may act as regulatory checkpoint for Ret signaling by modulating the rate of RET degradation after ligand activation; CD2AP converts it from an inhibitor to a promoter of RET degradation; the function limits the potency of GDNF on neuronal survival. The protein is E3 ubiquitin-protein ligase CBL-C (Cblc) of Rattus norvegicus (Rat).